Consider the following 490-residue polypeptide: Actin-related protein 6 (490 aa).

It belongs to the actin family. ARP6 subfamily.

Its subcellular location is the cytoplasm. It is found in the cytoskeleton. The polypeptide is Actin-related protein 6 (Dictyostelium discoideum (Social amoeba)).